A 271-amino-acid polypeptide reads, in one-letter code: Co-chaperone protein DjlA (271 aa).

The Periplasmic segment spans residues methionine 1 to lysine 6. Residues isoleucine 7–histidine 31 form a helical membrane-spanning segment. Topologically, residues methionine 32 to lysine 271 are cytoplasmic. The J domain maps to aspartate 205–lysine 271.

In terms of assembly, homodimer.

It is found in the cell inner membrane. In terms of biological role, regulatory DnaK co-chaperone. Direct interaction between DnaK and DjlA is needed for the induction of the wcaABCDE operon, involved in the synthesis of a colanic acid polysaccharide capsule, possibly through activation of the RcsB/RcsC phosphotransfer signaling pathway. The colanic acid capsule may help the bacterium survive conditions outside the host. In Escherichia coli (strain K12), this protein is Co-chaperone protein DjlA.